We begin with the raw amino-acid sequence, 598 residues long: Jacalin-related lectin 17 (598 aa).

The segment at 1–23 (MAQRLEAEGNKNFKGKSKWDDGS) is disordered. Jacalin-type lectin domains lie at 2–148 (AQRL…YVTW), 151–293 (PTKL…YFTT), 295–445 (PFTK…HFCP), and 452–595 (GEKV…HVLP).

It belongs to the jacalin lectin family.

This chain is Jacalin-related lectin 17 (JAL17), found in Arabidopsis thaliana (Mouse-ear cress).